Here is a 423-residue protein sequence, read N- to C-terminus: Glucose-1-phosphate adenylyltransferase (423 aa).

Residues Tyr110, Gly175, Glu190–Lys191, and Ser208 contribute to the alpha-D-glucose 1-phosphate site.

Belongs to the bacterial/plant glucose-1-phosphate adenylyltransferase family. In terms of assembly, homotetramer.

It catalyses the reaction alpha-D-glucose 1-phosphate + ATP + H(+) = ADP-alpha-D-glucose + diphosphate. It functions in the pathway glycan biosynthesis; glycogen biosynthesis. Functionally, involved in the biosynthesis of ADP-glucose, a building block required for the elongation reactions to produce glycogen. Catalyzes the reaction between ATP and alpha-D-glucose 1-phosphate (G1P) to produce pyrophosphate and ADP-Glc. The sequence is that of Glucose-1-phosphate adenylyltransferase from Nitrosococcus oceani (strain ATCC 19707 / BCRC 17464 / JCM 30415 / NCIMB 11848 / C-107).